Consider the following 236-residue polypeptide: Small ribosomal subunit protein uS2c (236 aa).

It belongs to the universal ribosomal protein uS2 family.

It localises to the plastid. The protein resides in the chloroplast. The sequence is that of Small ribosomal subunit protein uS2c (rps2) from Oryza sativa (Rice).